The chain runs to 235 residues: Ribonuclease 3 (235 aa).

Residues 6–131 enclose the RNase III domain; it reads IDQLERLTEH…LIAVMYLDGG (126 aa). Mg(2+) is bound at residue E44. D48 is an active-site residue. Residues D117 and E120 each contribute to the Mg(2+) site. Residue E120 is part of the active site. A DRBM domain is found at 156-225; the sequence is DAKTELQEWA…AEKVLRREGI (70 aa).

Belongs to the ribonuclease III family. As to quaternary structure, homodimer. Mg(2+) is required as a cofactor.

The protein localises to the cytoplasm. It catalyses the reaction Endonucleolytic cleavage to 5'-phosphomonoester.. Its function is as follows. Digests double-stranded RNA. Involved in the processing of primary rRNA transcript to yield the immediate precursors to the large and small rRNAs (23S and 16S). Processes some mRNAs, and tRNAs when they are encoded in the rRNA operon. Processes pre-crRNA and tracrRNA of type II CRISPR loci if present in the organism. In Bartonella quintana (strain Toulouse) (Rochalimaea quintana), this protein is Ribonuclease 3.